The chain runs to 3080 residues: Adhesion G-protein coupled receptor G4 (3080 aa).

Positions Met-1–Ser-27 are cleaved as a signal peptide. The Extracellular portion of the chain corresponds to Leu-28–Glu-2740. Residues Lys-29–Cys-228 form the Pentraxin (PTX) domain. Intrachain disulfides connect Cys-58-Cys-123 and Cys-200-Cys-228. Residue Asp-202 coordinates Mg(2+). Asn-233, Asn-487, Asn-836, and Asn-899 each carry an N-linked (GlcNAc...) asparagine glycan. Residues Ser-946–Thr-959 are compositionally biased toward polar residues. Positions Ser-946 to Pro-965 are disordered. Asn-1020 is a glycosylation site (N-linked (GlcNAc...) asparagine). The segment at Val-1274–Thr-1348 is disordered. Composition is skewed to polar residues over residues Met-1277 to Met-1296, Thr-1305 to Pro-1315, and Ser-1324 to Thr-1348. An N-linked (GlcNAc...) asparagine glycan is attached at Asn-1519. Residues Ser-2109–Thr-2139 show a composition bias toward polar residues. Positions Ser-2109 to Ser-2141 are disordered. 2 N-linked (GlcNAc...) asparagine glycosylation sites follow: Asn-2361 and Asn-2640. Residues Met-2578 to Thr-2734 form the GAIN-B domain. 2 disulfides stabilise this stretch: Cys-2685-Cys-2716 and Cys-2704-Cys-2718. A GPS region spans residues Cys-2685–Thr-2734. Residues His-2723–Thr-2734 are stachel. The chain crosses the membrane as a helical span at residues Gln-2741 to Ile-2766. Topologically, residues Ala-2767 to Ala-2777 are cytoplasmic. Residues Lys-2778–Leu-2800 traverse the membrane as a helical segment. At Ser-2801 to Val-2806 the chain is on the extracellular side. A helical membrane pass occupies residues Gly-2807–Tyr-2835. A disulfide bond links Cys-2809 and Cys-2886. Topologically, residues Leu-2836–Tyr-2849 are cytoplasmic. A helical transmembrane segment spans residues Ile-2850–Ser-2870. The Extracellular segment spans residues Val-2871–Ser-2892. A helical transmembrane segment spans residues Ile-2893–Val-2918. Over Gln-2919–His-2937 the chain is Cytoplasmic. A helical membrane pass occupies residues Asp-2938–Gly-2961. Topologically, residues Pro-2962 to Asn-2965 are extracellular. A helical membrane pass occupies residues Phe-2966–Met-2989. Topologically, residues Lys-2990 to Pro-3080 are cytoplasmic. Residues Phe-3051–Ser-3065 are compositionally biased toward polar residues. A disordered region spans residues Phe-3051–Pro-3080.

Belongs to the G-protein coupled receptor 2 family. Adhesion G-protein coupled receptor (ADGR) subfamily. Homodimer; homodimerizes via its Pentraxin domain in a calcium-independent manner. Heterodimer of 2 chains generated by proteolytic processing; the large extracellular N-terminal fragment and the membrane-bound C-terminal fragment predominantly remain associated and non-covalently linked. Autoproteolytically processed at the GPS region of the GAIN-B domain; this cleavage modulates receptor activity. Post-translationally, N-glycosylated. As to expression, detected in fetal retina. Highly expressed in normal enterochromaffin cells and in neuroendocrine carcinoma. Detected in normal liver; highly expressed in primary liver carcinoma.

The protein resides in the membrane. Forms a heterodimer of 2 chains generated by proteolytic processing that remain associated through non-covalent interactions mediated by the GAIN-B domain. In the inactivated receptor, the Stachel sequence (also named stalk) is embedded in the GAIN-B domain, where it adopts a beta-strand conformation. On activation, the Stachel moves into the 7 transmembrane region and adopts a twisted hook-shaped configuration that forms contacts within the receptor, leading to coupling of a G-alpha protein, which activates signaling. The cleaved GAIN-B and N-terminal domains can then dissociate from the rest of the receptor. In terms of biological role, orphan adhesion G-protein coupled receptor (aGPCR). Ligand binding causes a conformation change that triggers signaling via guanine nucleotide-binding proteins (G proteins) and modulates the activity of downstream effectors, such as adenylate cyclase. ADGRG4 is coupled to G(s) G proteins and mediates activation of adenylate cyclase activity. May be act as sensor of mechanical forces. The chain is Adhesion G-protein coupled receptor G4 from Homo sapiens (Human).